We begin with the raw amino-acid sequence, 594 residues long: Protein TRANSPORT INHIBITOR RESPONSE 1 (594 aa).

Residues lysine 3–isoleucine 50 enclose the F-box domain. A 1D-myo-inositol hexakisphosphate-binding site is contributed by lysine 74. The interval aspartate 81–phenylalanine 82 is interaction with auxin-responsive proteins. 1D-myo-inositol hexakisphosphate contacts are provided by residues lysine 113–arginine 114 and arginine 344. Positions proline 347–valine 352 are interaction with auxin-responsive proteins. Arginine 401–arginine 403 lines the 1D-myo-inositol hexakisphosphate pocket. Arginine 403 contacts (indol-3-yl)acetate. Positions cysteine 405 to proline 409 are interaction with auxin-responsive proteins. Arginine 436 contributes to the 1D-myo-inositol hexakisphosphate binding site. Residue serine 438–leucine 439 participates in (indol-3-yl)acetate binding. Positions alanine 464 to phenylalanine 465 are interaction with auxin-responsive proteins. 1D-myo-inositol hexakisphosphate is bound by residues arginine 484 to lysine 485 and arginine 509.

As to quaternary structure, interacts with auxin. Part of a SCF E3 ubiquitin ligase complex SCF(TIR1) composed of SKP1, CUL1, RBX1 and TIR1. SCF(TIR1) interacts with the COP9 signalosome (CSN) complex. Interacts with Aux/IAA proteins (IAA3, IAA7, IAA12 and IAA17) in an auxin-dependent manner. The interaction with IAA3, a negative regulator of auxin responses, is promoted by auxin, but repressed by juglon (5-hydroxy-1,4-naphthoquinone). Interactions with auxin-responsive proteins is inactivated by auxin antagonists. Expressed in roots, stems, leaves and flowers. In adult plants, mostly expressed in floral stigma, anther filaments, abscission zones and vascular tissues.

The protein localises to the nucleus. The protein operates within protein modification; protein ubiquitination. In terms of biological role, auxin receptor that mediates Aux/IAA proteins proteasomal degradation and auxin-regulated transcription. The SCF(TIR1) E3 ubiquitin ligase complex is involved in auxin-mediated signaling pathway that regulate root and hypocotyl growth, lateral root formation, cell elongation, and gravitropism. Appears to allow pericycle cells to overcome G2 arrest prior to lateral root development. Plays a role in ethylene signaling in roots. Confers sensitivity to the virulent bacterial pathogen P.syringae. This chain is Protein TRANSPORT INHIBITOR RESPONSE 1 (TIR1), found in Arabidopsis thaliana (Mouse-ear cress).